Reading from the N-terminus, the 255-residue chain is 5'-nucleotidase SurE (255 aa).

4 residues coordinate a divalent metal cation: D8, D9, S40, and N92.

The protein belongs to the SurE nucleotidase family. A divalent metal cation is required as a cofactor.

It localises to the cytoplasm. It carries out the reaction a ribonucleoside 5'-phosphate + H2O = a ribonucleoside + phosphate. Functionally, nucleotidase that shows phosphatase activity on nucleoside 5'-monophosphates. The protein is 5'-nucleotidase SurE of Brucella abortus (strain S19).